A 153-amino-acid polypeptide reads, in one-letter code: Transcriptional repressor NrdR (153 aa).

A zinc finger spans residues 3–34; the sequence is CPSCFHNGTRVLDSRPVDEGRSIRRRRECESC. In terms of domain architecture, ATP-cone spans 49–139; the sequence is LIVVKKEGTR…VYRQFKDLNV (91 aa).

Belongs to the NrdR family. Requires Zn(2+) as cofactor.

In terms of biological role, negatively regulates transcription of bacterial ribonucleotide reductase nrd genes and operons by binding to NrdR-boxes. The sequence is that of Transcriptional repressor NrdR from Bacillus cytotoxicus (strain DSM 22905 / CIP 110041 / 391-98 / NVH 391-98).